The primary structure comprises 75 residues: Large ribosomal subunit protein bL31c (75 aa).

Belongs to the bacterial ribosomal protein bL31 family. Type A subfamily. As to quaternary structure, part of the 50S ribosomal subunit.

Its subcellular location is the plastid. The protein resides in the chloroplast. Its function is as follows. Binds the 23S rRNA. This is Large ribosomal subunit protein bL31c from Cyanidium caldarium (Red alga).